Consider the following 267-residue polypeptide: NAD kinase 2 (267 aa).

The active-site Proton acceptor is the Asp50. NAD(+)-binding positions include 50–51 (DG), Lys55, 122–123 (NE), Arg149, Asp151, 162–167 (TAYNKS), and Ala186.

It belongs to the NAD kinase family. It depends on a divalent metal cation as a cofactor.

It is found in the cytoplasm. The enzyme catalyses NAD(+) + ATP = ADP + NADP(+) + H(+). Functionally, involved in the regulation of the intracellular balance of NAD and NADP, and is a key enzyme in the biosynthesis of NADP. Catalyzes specifically the phosphorylation on 2'-hydroxyl of the adenosine moiety of NAD to yield NADP. The sequence is that of NAD kinase 2 from Listeria monocytogenes serovar 1/2a (strain ATCC BAA-679 / EGD-e).